The sequence spans 629 residues: Phosphomethylpyrimidine synthase (629 aa).

The segment at 1–21 (MSIKAKNAAHLRESAQVDSGS) is disordered. Substrate contacts are provided by residues N233, M262, Y291, H327, 347-349 (SRG), 388-391 (DGLR), and E427. H431 lines the Zn(2+) pocket. Y454 contacts substrate. H495 contributes to the Zn(2+) binding site. C575, C578, and C583 together coordinate [4Fe-4S] cluster.

Belongs to the ThiC family. Homodimer. [4Fe-4S] cluster serves as cofactor.

It catalyses the reaction 5-amino-1-(5-phospho-beta-D-ribosyl)imidazole + S-adenosyl-L-methionine = 4-amino-2-methyl-5-(phosphooxymethyl)pyrimidine + CO + 5'-deoxyadenosine + formate + L-methionine + 3 H(+). It functions in the pathway cofactor biosynthesis; thiamine diphosphate biosynthesis. Its function is as follows. Catalyzes the synthesis of the hydroxymethylpyrimidine phosphate (HMP-P) moiety of thiamine from aminoimidazole ribotide (AIR) in a radical S-adenosyl-L-methionine (SAM)-dependent reaction. The polypeptide is Phosphomethylpyrimidine synthase (Pseudomonas syringae pv. syringae (strain B728a)).